The following is an 839-amino-acid chain: Dynein axonemal assembly factor 5 (839 aa).

HEAT repeat units follow at residues 10 to 48 (TSDV…DEKL), 54 to 92 (QHVF…HVPR), 94 to 137 (EEAL…VCGK), 140 to 178 (APYL…CIPE), 181 to 219 (HMQA…YSSG), 221 to 257 (SVDD…KLQD), 259 to 297 (YSFF…QWEK), 578 to 617 (GETL…KASE), 675 to 713 (LQVE…TCER), 717 to 755 (PDKL…CITD), and 723 to 761 (IYPE…ERTT).

This sequence belongs to the DNAAF5 family. Interacts with DNAI2; probably involved in outer arm dynein assembly.

It localises to the cytoplasm. Its subcellular location is the dynein axonemal particle. Functionally, cytoplasmic protein involved in the delivery of the dynein machinery to the motile cilium. It is required for the assembly of the axonemal dynein inner and outer arms, two structures attached to the peripheral outer doublet A microtubule of the axoneme, that play a crucial role in cilium motility. In Xenopus laevis (African clawed frog), this protein is Dynein axonemal assembly factor 5.